A 201-amino-acid polypeptide reads, in one-letter code: Small ribosomal subunit protein uS4c (201 aa).

The S4 RNA-binding domain maps to 89-150; that stretch reads MRLDNIVFRL…RQKSQAIITK (62 aa).

This sequence belongs to the universal ribosomal protein uS4 family. In terms of assembly, part of the 30S ribosomal subunit. Contacts protein S5. The interaction surface between S4 and S5 is involved in control of translational fidelity.

It localises to the plastid. The protein localises to the chloroplast. Its function is as follows. One of the primary rRNA binding proteins, it binds directly to 16S rRNA where it nucleates assembly of the body of the 30S subunit. With S5 and S12 plays an important role in translational accuracy. This Funaria hygrometrica (Moss) protein is Small ribosomal subunit protein uS4c (rps4).